Here is a 141-residue protein sequence, read N- to C-terminus: Hemoglobin subunit alpha (141 aa).

A Globin domain is found at 1 to 141 (VLSAADKTAI…VATALGSHYR (141 aa)). His-59 contacts O2. Heme b is bound at residue His-88.

This sequence belongs to the globin family. In terms of assembly, heterotetramer of two alpha chains and two beta chains. As to expression, red blood cells.

Involved in oxygen transport from the lung to the various peripheral tissues. The sequence is that of Hemoglobin subunit alpha (HBA) from Squalus acanthias (Spiny dogfish).